A 340-amino-acid polypeptide reads, in one-letter code: Arginine N-succinyltransferase subunit beta (340 aa).

It belongs to the succinylarginine dihydrolase family. As to quaternary structure, heterotetramer of two alpha and two beta subunits.

It carries out the reaction succinyl-CoA + L-arginine = N(2)-succinyl-L-arginine + CoA + H(+). It functions in the pathway amino-acid degradation; L-arginine degradation via AST pathway; L-glutamate and succinate from L-arginine: step 1/5. This Pseudomonas aeruginosa (strain ATCC 15692 / DSM 22644 / CIP 104116 / JCM 14847 / LMG 12228 / 1C / PRS 101 / PAO1) protein is Arginine N-succinyltransferase subunit beta (aruG).